Reading from the N-terminus, the 269-residue chain is Acyl-CoA-binding domain-containing protein 4 (269 aa).

The ACB domain occupies 12–101 (CQKQFQAAVS…MKLVAQKVID (90 aa)). An acyl-CoA contacts are provided by residues 23-32 (IQNLPKNGSY), 43-47 (YSYYK), lysine 69, and tyrosine 88. Disordered stretches follow at residues 150–175 (GAVS…PRDL), 195–226 (EQRA…QCSA), and 248–269 (VALP…SAAN). Residues 156-167 (PCLPKEPAPPSP) are compositionally biased toward pro residues. 2 positions are modified to phosphoserine: serine 166 and serine 171.

Its function is as follows. Binds medium- and long-chain acyl-CoA esters and may function as an intracellular carrier of acyl-CoA esters. The polypeptide is Acyl-CoA-binding domain-containing protein 4 (ACBD4) (Pongo abelii (Sumatran orangutan)).